The chain runs to 364 residues: MLIFPLINDTSRKIIHIDMDAFFAAVEERDNPALKGKPVVIGKDPRETGGRGVVSTCNYEARKYGIHSAMSCKEAYERCPKAIFISGNYEKYRTVGDQIRRIFKRYTDVVEPMSIDEAYVDVTNNKLGIKSAVKIAKLIQHDMWKEVGLTCSAGVSYNKFLGKLASDFEKPHGLTLVLKEDALCFLAKLPIEKFHGVGKKSVEKLHDMGIYTGQDLLAVPEMTLIDHFGRFGFDLYRKARGISNSPVKSDRIRKSIGSERTYAKLLYQETDIKAEISKNAKRVAALLQDHKKLGKTIVLKVRYADFTTLTKRVTLPELTRNAAQIEQVAGDIFDSLSENPAGIRLLGVTMTNLEDKVADISLDL.

The region spanning 14–198 is the UmuC domain; it reads IIHIDMDAFF…LPIEKFHGVG (185 aa). The Mg(2+) site is built by Asp18 and Asp116. Residue Glu117 is part of the active site.

This sequence belongs to the DNA polymerase type-Y family. In terms of assembly, monomer. Requires Mg(2+) as cofactor.

It is found in the cytoplasm. The enzyme catalyses DNA(n) + a 2'-deoxyribonucleoside 5'-triphosphate = DNA(n+1) + diphosphate. Functionally, poorly processive, error-prone DNA polymerase involved in untargeted mutagenesis. Copies undamaged DNA at stalled replication forks, which arise in vivo from mismatched or misaligned primer ends. These misaligned primers can be extended by PolIV. Exhibits no 3'-5' exonuclease (proofreading) activity. May be involved in translesional synthesis, in conjunction with the beta clamp from PolIII. This Streptococcus pyogenes serotype M4 (strain MGAS10750) protein is DNA polymerase IV.